Reading from the N-terminus, the 209-residue chain is Uracil phosphoribosyltransferase (209 aa).

5-phospho-alpha-D-ribose 1-diphosphate-binding positions include arginine 79, arginine 104, and 131–139 (DPMLATGHT). Uracil is bound by residues isoleucine 194 and 199-201 (GDA). Position 200 (aspartate 200) interacts with 5-phospho-alpha-D-ribose 1-diphosphate.

The protein belongs to the UPRTase family. The cofactor is Mg(2+).

The enzyme catalyses UMP + diphosphate = 5-phospho-alpha-D-ribose 1-diphosphate + uracil. The protein operates within pyrimidine metabolism; UMP biosynthesis via salvage pathway; UMP from uracil: step 1/1. Its activity is regulated as follows. Allosterically activated by GTP. Catalyzes the conversion of uracil and 5-phospho-alpha-D-ribose 1-diphosphate (PRPP) to UMP and diphosphate. The protein is Uracil phosphoribosyltransferase of Caulobacter sp. (strain K31).